A 190-amino-acid polypeptide reads, in one-letter code: MSEGSEDTKTKLDSAGELSDVDNENCSSSGSGGGSSSGDTKRTCVDCGTIRTPLWRGGPAGPKSLCNACGIKSRKKRQAALGMRSEEKKKNRKSNCNNDLNLDHRNAKKYKINIVDDGKIDIDDDPKICNNKRSSSSSSNKGVSKFLDLGFKVPVMKRSAVEKKRLWRKLGEEERAAVLLMALSCSSVYA.

Basic and acidic residues predominate over residues methionine 1–serine 14. Disordered stretches follow at residues methionine 1 to arginine 42 and arginine 77 to asparagine 101. The GATA-type zinc-finger motif lies at glycine 38 to arginine 92.

This sequence belongs to the type IV zinc-finger family. Class B subfamily.

The protein resides in the nucleus. In terms of biological role, transcriptional regulator that specifically binds 5'-GATA-3' or 5'-GAT-3' motifs within gene promoters. This is GATA transcription factor 17 (GATA17) from Arabidopsis thaliana (Mouse-ear cress).